The sequence spans 442 residues: D-inositol 3-phosphate glycosyltransferase (442 aa).

Histidine 15 contributes to the 1D-myo-inositol 3-phosphate binding site. UDP-N-acetyl-alpha-D-glucosamine is bound by residues 21–22 and glycine 29; that span reads QP. Residues 26–31, lysine 84, tyrosine 117, threonine 141, and arginine 161 contribute to the 1D-myo-inositol 3-phosphate site; that span reads DAGGMN. UDP-N-acetyl-alpha-D-glucosamine contacts are provided by arginine 235, lysine 240, and glutamine 299. Mg(2+) is bound by residues tyrosine 308, arginine 309, and serine 311. Residues glutamate 321 and glutamate 329 each coordinate UDP-N-acetyl-alpha-D-glucosamine. Threonine 335 serves as a coordination point for Mg(2+).

This sequence belongs to the glycosyltransferase group 1 family. MshA subfamily. As to quaternary structure, homodimer.

It catalyses the reaction 1D-myo-inositol 3-phosphate + UDP-N-acetyl-alpha-D-glucosamine = 1D-myo-inositol 2-acetamido-2-deoxy-alpha-D-glucopyranoside 3-phosphate + UDP + H(+). Functionally, catalyzes the transfer of a N-acetyl-glucosamine moiety to 1D-myo-inositol 3-phosphate to produce 1D-myo-inositol 2-acetamido-2-deoxy-glucopyranoside 3-phosphate in the mycothiol biosynthesis pathway. The chain is D-inositol 3-phosphate glycosyltransferase from Rhodococcus erythropolis (strain PR4 / NBRC 100887).